The primary structure comprises 257 residues: Chymotrypsin-like protease VLCTLP (257 aa).

The signal sequence occupies residues 1 to 18; sequence MVLIRVLANLLLLQLSYA. A propeptide spanning residues 19–24 is cleaved from the precursor; the sequence is QKSSEL. The region spanning 25-248 is the Peptidase S1 domain; the sequence is VVGGDECNIN…YSDWIQSIIA (224 aa). 6 cysteine pairs are disulfide-bonded: Cys-31–Cys-162, Cys-49–Cys-65, Cys-97–Cys-255, Cys-141–Cys-209, Cys-173–Cys-188, and Cys-199–Cys-224. N-linked (GlcNAc...) asparagine glycosylation is present at Asn-44. His-64 acts as the Charge relay system in catalysis. A glycan (N-linked (GlcNAc...) asparagine) is linked at Asn-100. Asp-109 (charge relay system) is an active-site residue. N-linked (GlcNAc...) asparagine glycans are attached at residues Asn-116 and Asn-153. Ser-203 serves as the catalytic Charge relay system. Asn-250 carries N-linked (GlcNAc...) asparagine glycosylation.

It belongs to the peptidase S1 family. Snake venom subfamily. Monomer. Partial deglycosylation has not effect on enzyme activity. As to expression, expressed by the venom gland.

It localises to the secreted. Its activity is regulated as follows. Inhibited by PMSF. In terms of biological role, snake venom serine protease with tyrosine-specific chymotrypsin-like activity. Hydrolyzes the N-acetyl-L-tyrosine ethyl ester (ATEE). Has weak fibrinogenolytic activity. Weakly hydrolyzes azocasein, Aalpha-chain (FGA) and more slowly Bbeta-chain (FGB) of fibrinogen. Optimal substrates are angiotensins I and II (AGT). In Macrovipera lebetinus (Levantine viper), this protein is Chymotrypsin-like protease VLCTLP.